A 134-amino-acid chain; its full sequence is Phosphoribosyl-AMP cyclohydrolase (134 aa).

D77 provides a ligand contact to Mg(2+). C78 serves as a coordination point for Zn(2+). D79 and D81 together coordinate Mg(2+). Zn(2+) is bound by residues C95 and C102.

The protein belongs to the PRA-CH family. Homodimer. Mg(2+) serves as cofactor. The cofactor is Zn(2+).

The protein resides in the cytoplasm. The catalysed reaction is 1-(5-phospho-beta-D-ribosyl)-5'-AMP + H2O = 1-(5-phospho-beta-D-ribosyl)-5-[(5-phospho-beta-D-ribosylamino)methylideneamino]imidazole-4-carboxamide. It functions in the pathway amino-acid biosynthesis; L-histidine biosynthesis; L-histidine from 5-phospho-alpha-D-ribose 1-diphosphate: step 3/9. In terms of biological role, catalyzes the hydrolysis of the adenine ring of phosphoribosyl-AMP. The protein is Phosphoribosyl-AMP cyclohydrolase of Pseudomonas aeruginosa (strain UCBPP-PA14).